The primary structure comprises 305 residues: Sulfate adenylyltransferase subunit 2 (305 aa).

The protein belongs to the PAPS reductase family. CysD subfamily. Heterodimer composed of CysD, the smaller subunit, and CysN.

The catalysed reaction is sulfate + ATP + H(+) = adenosine 5'-phosphosulfate + diphosphate. It participates in sulfur metabolism; hydrogen sulfide biosynthesis; sulfite from sulfate: step 1/3. In terms of biological role, with CysN forms the ATP sulfurylase (ATPS) that catalyzes the adenylation of sulfate producing adenosine 5'-phosphosulfate (APS) and diphosphate, the first enzymatic step in sulfur assimilation pathway. APS synthesis involves the formation of a high-energy phosphoric-sulfuric acid anhydride bond driven by GTP hydrolysis by CysN coupled to ATP hydrolysis by CysD. The polypeptide is Sulfate adenylyltransferase subunit 2 (Stutzerimonas stutzeri (strain A1501) (Pseudomonas stutzeri)).